A 655-amino-acid polypeptide reads, in one-letter code: p-hydroxybenzoic acid efflux pump subunit AaeB (655 aa).

The next 11 membrane-spanning stretches (helical) occupy residues 13–33, 38–58, 69–89, 93–113, 121–141, 152–172, 370–390, 407–427, 431–451, 459–479, and 482–502; these read FAVKLACAIVLALFIGFHFQL, WAVLTAAIVAAGPAFAAGGEP, LRIIGTFIGCIAALIIIISMI, LLMILVCCVWAGFCTWISSLV, WGLSGYTALIIVITIQMEPLL, EIVIGIGCAILADLLFSPRSI, LFWLWTGWTSGNGAMVMIAVV, FIYGTLAALPLGLLYFLVIIP, QSMLLLCLSLAVLGFFIGIEV, MGALASTINIIVLDNPMTFHF, and FLDSALGQIVGCMLAFIVILL.

Belongs to the aromatic acid exporter ArAE (TC 2.A.85) family.

The protein resides in the cell inner membrane. In terms of biological role, forms an efflux pump with AaeA. Could function as a metabolic relief valve, allowing to eliminate certain compounds when they accumulate to high levels in the cell. The chain is p-hydroxybenzoic acid efflux pump subunit AaeB from Salmonella heidelberg (strain SL476).